Reading from the N-terminus, the 271-residue chain is uncharacterized protein (271 aa).

3 helical membrane passes run 11–33, 172–194, and 214–236; these read GWLA…LAPW, SINT…LQLI, and FLSY…GYFA. The interval 245–271 is disordered; the sequence is REKAGSPPPDKPMTVEQKLADRYGRRR. Basic and acidic residues predominate over residues 262–271; that stretch reads KLADRYGRRR.

It belongs to the SURF1 family.

The protein localises to the cell membrane. This is an uncharacterized protein from Mycobacterium tuberculosis (strain CDC 1551 / Oshkosh).